Here is an 827-residue protein sequence, read N- to C-terminus: Periplasmic nitrate reductase (827 aa).

Residues 1–32 (MELNRRDFMKANAAAAAALAAGITLPVKNVYA) constitute a signal peptide (tat-type signal). Positions 37-93 (IKWDKAPCRFCGTGCSVLVGTQNGRMVASQGDPDAEVNRGLNCIKGYFLPKIIYGKD) constitute a 4Fe-4S Mo/W bis-MGD-type domain. Residues C44, C47, C51, and C79 each coordinate [4Fe-4S] cluster. Mo-bis(molybdopterin guanine dinucleotide) contacts are provided by residues K81, Q148, N173, C177, 210–217 (WGSNMAEM), 241–245 (STFEH), M371, Q375, N481, 507–508 (SD), K530, D557, and 717–726 (TGRVLEHWHS). A substrate-binding site is contributed by F793. Residues N801 and K818 each contribute to the Mo-bis(molybdopterin guanine dinucleotide) site.

It belongs to the prokaryotic molybdopterin-containing oxidoreductase family. NasA/NapA/NarB subfamily. In terms of assembly, component of the periplasmic nitrate reductase NapAB complex composed of NapA and NapB. The cofactor is [4Fe-4S] cluster. Requires Mo-bis(molybdopterin guanine dinucleotide) as cofactor. Post-translationally, predicted to be exported by the Tat system. The position of the signal peptide cleavage has not been experimentally proven.

The protein localises to the periplasm. It carries out the reaction 2 Fe(II)-[cytochrome] + nitrate + 2 H(+) = 2 Fe(III)-[cytochrome] + nitrite + H2O. In terms of biological role, catalytic subunit of the periplasmic nitrate reductase complex NapAB. Receives electrons from NapB and catalyzes the reduction of nitrate to nitrite. The protein is Periplasmic nitrate reductase of Glaesserella parasuis serovar 5 (strain SH0165) (Haemophilus parasuis).